Reading from the N-terminus, the 230-residue chain is Sodium channel modifier 1 (230 aa).

Ser2 bears the Phosphoserine mark. The Bipartite nuclear localization signal signature appears at 4–20 (KREGDDWSQLNVLKKRR). A Matrin-type zinc finger spans residues 42 to 74 (FACAICPHRPVLDTLAMLTAHRAGKKHLSSLQL). A Glycyl lysine isopeptide (Lys-Gly) (interchain with G-Cter in SUMO2) cross-link involves residue Lys67. 2 disordered regions span residues 76–106 (YGKKPPGKGTEQNPRQHNELRREETTAEAPL) and 129–191 (RRKY…RALD). Basic and acidic residues predominate over residues 89-100 (PRQHNELRREET). Residues 142-151 (SRPPLPPPEV) are compositionally biased toward pro residues. The segment covering 167 to 180 (GSQTKESATVSSPA) has biased composition (polar residues). Residues Ser183 and Ser219 each carry the phosphoserine modification. Positions 188–230 (RALDHYLTLRSSGWIPDGRGRWIKDENVEFDSDEEEPPDLPLD) are required for interaction with LUC7L2.

As to quaternary structure, component of the minor spliceosome. Within this complex, interacts with RNF113A, as well as with SF3B1/SF3b155, SF3B2/SF3b145, SF3B3/SF3b130 and CDC5L. May interact with LUC7L2 and SNRNP70.

The protein localises to the nucleus. The protein resides in the nucleoplasm. Its subcellular location is the nucleus speckle. Functionally, as a component of the minor spliceosome, involved in the splicing of U12-type introns in pre-mRNAs. Plays a role in the regulation of primary cilia length and Hedgehog signaling. This is Sodium channel modifier 1 (SCNM1) from Bos taurus (Bovine).